A 1966-amino-acid polypeptide reads, in one-letter code: Histone-lysine N-methyltransferase SETD1B (1966 aa).

The span at 1–12 shows a compositional bias: basic residues; sequence MENSHPPHHHHQ. Positions 1 to 26 are disordered; it reads MENSHPPHHHHQQPPPQPGPSGERRN. The interaction with WDR82 stretch occupies residues 68–98; sequence VEDPRVVGIWTKNKELELSVPKFKIDEFYVG. The RRM domain occupies 93–181; sequence DEFYVGPVPP…NIIHVELDTK (89 aa). Disordered stretches follow at residues 235–302, 357–660, 675–719, 963–1462, 1501–1541, 1555–1606, and 1636–1668; these read GCGS…LFSQ, VGGT…PKPM, LAPT…PPPA, KVKR…SGPL, PPLL…RPPA, QPQT…KLPF, and AKSR…PQPL. Polar residues-rich tracts occupy residues 243-259, 265-274, and 282-300; these read VTPN…TAYS, TPNSYGQGTP, and PFSQ…SYLF. Pro residues-rich tracts occupy residues 432 to 441 and 449 to 458; these read PAPPPLPPAE and GTPPGPPPPD. Over residues 493–521 the composition is skewed to basic and acidic residues; that stretch reads EKPHDSLDSRIEMLLKEQRTKLLFLREPD. Over residues 531–543 the composition is skewed to low complexity; sequence SPISSSSSQLSPL. The span at 592–603 shows a compositional bias: pro residues; the sequence is PRPPPEPGPPDP. Residues 637-646 show a composition bias toward acidic residues; the sequence is EDMEISDDEM. The segment covering 679-719 has biased composition (pro residues); that stretch reads LPLPPPPGFPPLPPPPPPPPPQPGFPMPPPLPPPPPPPPPA. Ser986 and Ser994 each carry phosphoserine. The span at 995–1015 shows a compositional bias: basic and acidic residues; it reads ERERDRDMADTPCELAKRDPK. Ser1031 carries the phosphoserine modification. Residues 1041–1064 are compositionally biased toward low complexity; sequence LSASSSSSASSSSGSSTTSPSSSA. 2 stretches are compositionally biased toward acidic residues: residues 1067–1087 and 1104–1142; these read KEEE…EEEE and KDDD…EEET. The segment covering 1148 to 1174 has biased composition (low complexity); the sequence is SKAEATSSSESSESSEFESSSESSPSS. Residues 1173–1204 are a coiled coil; that stretch reads SSSEDEEEVVAREEEEEEEEEEMVAEESMASA. Acidic residues-rich tracts occupy residues 1175-1197 and 1229-1238; these read SEDE…EMVA and GMEEEVDIET. Residues Ser1265, Ser1283, and Ser1335 each carry the phosphoserine modification. The span at 1312–1340 shows a compositional bias: pro residues; that stretch reads EPPMMLPLPLQPPLPPPRPPRPPSPPPEP. Residues 1383–1425 show a composition bias toward low complexity; it reads PGGEPPLSGGSSGLSLSSPQVPGSPFSYPAPSPSLSSGGLPRT. The span at 1501–1514 shows a compositional bias: pro residues; sequence PPLLPAPLASCPPP. Residues 1515–1524 show a composition bias toward basic residues; it reads MKRKPGRPRR. The segment covering 1580-1600 has biased composition (pro residues); it reads PAPPPPLPPQPPPPPPPPPVE. 2 positions are modified to phosphoserine: Ser1659 and Ser1663. A WDR5 interaction motif (WIN) motif is present at residues 1745 to 1750; sequence GCARSE. A disordered region spans residues 1767–1800; sequence SRASTDEPPADTQGMSIPAQPHASTRAGSERRSE. The short motif at 1798–1803 is the RxxxRR motif element; that stretch reads RSEQRR. One can recognise an SET domain in the interval 1827–1944; the sequence is KKLKFCKSHI…VNEEITYDYK (118 aa). Tyr1943 contributes to the S-adenosyl-L-methionine binding site. A Post-SET domain is found at 1950-1966; the sequence is VKIPCLCGSENCRGTLN.

It belongs to the class V-like SAM-binding methyltransferase superfamily. In terms of assembly, component of the SET1B/COMPASS complex composed of the catalytic subunit SETD1B, WDR5, WDR82, RBBP5, ASH2L/ASH2, CXXC1/CFP1, HCFC1, DPY30 homotrimer and BOD1. Forms a core complex with the evolutionary conserved subcomplex WRAD composed of WDR5, RBBP5, ASH2L/ASH2 and DPY30 subunits; WRAD differentially stimulates the methyltransferase activity. Interacts with HCFC1 and ASH2L/ASH2. Interacts (via N-terminal region) with WDR82. Interacts (via the RRM domain) with hyperphosphorylated C-terminal domain (CTD) of RNA polymerase II large subunit (POLR2A) only in the presence of WDR82. Binds specifically to CTD heptad repeats phosphorylated on 'Ser-5' of each heptad. Interacts with RBM15. Interacts (via WIN motif) with WDR5.

Its subcellular location is the nucleus. The protein localises to the nucleus speckle. The protein resides in the chromosome. It localises to the cytoplasm. The catalysed reaction is L-lysyl(4)-[histone H3] + S-adenosyl-L-methionine = N(6)-methyl-L-lysyl(4)-[histone H3] + S-adenosyl-L-homocysteine + H(+). It carries out the reaction N(6)-methyl-L-lysyl(4)-[histone H3] + S-adenosyl-L-methionine = N(6),N(6)-dimethyl-L-lysyl(4)-[histone H3] + S-adenosyl-L-homocysteine + H(+). It catalyses the reaction N(6),N(6)-dimethyl-L-lysyl(4)-[histone H3] + S-adenosyl-L-methionine = N(6),N(6),N(6)-trimethyl-L-lysyl(4)-[histone H3] + S-adenosyl-L-homocysteine + H(+). In terms of biological role, histone methyltransferase that catalyzes methyl group transfer from S-adenosyl-L-methionine to the epsilon-amino group of 'Lys-4' of histone H3 (H3K4) via a non-processive mechanism. Part of chromatin remodeling machinery, forms H3K4me1, H3K4me2 and H3K4me3 methylation marks at active chromatin sites where transcription and DNA repair take place. Plays an essential role in regulating the transcriptional programming of multipotent hematopoietic progenitor cells and lymphoid lineage specification during hematopoiesis. The sequence is that of Histone-lysine N-methyltransferase SETD1B (SETD1B) from Homo sapiens (Human).